Here is a 307-residue protein sequence, read N- to C-terminus: Transcriptional repressor scratch 2 (307 aa).

The tract at residues 1–20 (MPRSFLVKKIKGDGFQCSGV) is SNAG domain. Disordered stretches follow at residues 34–90 (LPGA…PQSS) and 116–148 (GRSR…AGAQ). Residues 124-148 (GGGGDAGGSGDAGGAGGRAGRAGAQ) are compositionally biased toward gly residues. 4 consecutive C2H2-type zinc fingers follow at residues 155-177 (HACA…KQTH), 186-208 (RKCP…LLTH), 212-234 (HKCG…MRSH), and 240-262 (FGCA…MQTH). A C2H2-type 5; atypical zinc finger spans residues 268-291 (YRCRQCDKSFALKSYLHKHCEAAC).

The protein belongs to the snail C2H2-type zinc-finger protein family.

The protein resides in the nucleus. In terms of biological role, may be involved in transcriptional regulation. The protein is Transcriptional repressor scratch 2 (SCRT2) of Homo sapiens (Human).